Reading from the N-terminus, the 601-residue chain is Elongation factor 4 (601 aa).

The region spanning 7-189 is the tr-type G domain; sequence SLIRNFSIIA…ALVTRLPPPV (183 aa). GTP is bound by residues 19–24 and 136–139; these read DHGKST and NKVD.

Belongs to the TRAFAC class translation factor GTPase superfamily. Classic translation factor GTPase family. LepA subfamily.

It is found in the cell inner membrane. It catalyses the reaction GTP + H2O = GDP + phosphate + H(+). Its function is as follows. Required for accurate and efficient protein synthesis under certain stress conditions. May act as a fidelity factor of the translation reaction, by catalyzing a one-codon backward translocation of tRNAs on improperly translocated ribosomes. Back-translocation proceeds from a post-translocation (POST) complex to a pre-translocation (PRE) complex, thus giving elongation factor G a second chance to translocate the tRNAs correctly. Binds to ribosomes in a GTP-dependent manner. This is Elongation factor 4 from Gluconacetobacter diazotrophicus (strain ATCC 49037 / DSM 5601 / CCUG 37298 / CIP 103539 / LMG 7603 / PAl5).